The chain runs to 463 residues: Chromosomal replication initiator protein DnaA (463 aa).

The tract at residues 1-84 (MNTNQIILTN…QLFQHYNNAI (84 aa)) is domain I, interacts with DnaA modulators. The domain II stretch occupies residues 84-124 (IKTVEIITKELPASNQATLELPTKTFADIGSSELNSENIFS). The tract at residues 125–343 (TFDIRFTFDN…GALNKVIAHS (219 aa)) is domain III, AAA+ region. The ATP site is built by glycine 171, glycine 173, lysine 174, and threonine 175. Positions 344 to 463 (NFTAKEITLE…INLMMKILQN (120 aa)) are domain IV, binds dsDNA.

This sequence belongs to the DnaA family. In terms of assembly, oligomerizes as a right-handed, spiral filament on DNA at oriC.

It is found in the cytoplasm. Its function is as follows. Plays an essential role in the initiation and regulation of chromosomal replication. ATP-DnaA binds to the origin of replication (oriC) to initiate formation of the DNA replication initiation complex once per cell cycle. Binds the DnaA box (a 9 base pair repeat at the origin) and separates the double-stranded (ds)DNA. Forms a right-handed helical filament on oriC DNA; dsDNA binds to the exterior of the filament while single-stranded (ss)DNA is stabiized in the filament's interior. The ATP-DnaA-oriC complex binds and stabilizes one strand of the AT-rich DNA unwinding element (DUE), permitting loading of DNA polymerase. After initiation quickly degrades to an ADP-DnaA complex that is not apt for DNA replication. Binds acidic phospholipids. This chain is Chromosomal replication initiator protein DnaA, found in Rickettsia bellii (strain RML369-C).